A 159-amino-acid polypeptide reads, in one-letter code: Ribosomal RNA large subunit methyltransferase H (159 aa).

S-adenosyl-L-methionine is bound by residues Gly108 and 127–132 (FGPMTF).

This sequence belongs to the RNA methyltransferase RlmH family. As to quaternary structure, homodimer.

The protein localises to the cytoplasm. The catalysed reaction is pseudouridine(1915) in 23S rRNA + S-adenosyl-L-methionine = N(3)-methylpseudouridine(1915) in 23S rRNA + S-adenosyl-L-homocysteine + H(+). In terms of biological role, specifically methylates the pseudouridine at position 1915 (m3Psi1915) in 23S rRNA. In Magnetococcus marinus (strain ATCC BAA-1437 / JCM 17883 / MC-1), this protein is Ribosomal RNA large subunit methyltransferase H.